Here is a 559-residue protein sequence, read N- to C-terminus: Formate--tetrahydrofolate ligase (559 aa).

Residue 68 to 75 (TPAGEGKT) participates in ATP binding.

The protein belongs to the formate--tetrahydrofolate ligase family.

It catalyses the reaction (6S)-5,6,7,8-tetrahydrofolate + formate + ATP = (6R)-10-formyltetrahydrofolate + ADP + phosphate. Its pathway is one-carbon metabolism; tetrahydrofolate interconversion. This chain is Formate--tetrahydrofolate ligase, found in Sinorhizobium fredii (strain NBRC 101917 / NGR234).